We begin with the raw amino-acid sequence, 235 residues long: Voltage-gated hydrogen channel 1 (235 aa).

Over 1–65 (MSRYLKHFTA…SLRKLYSTER (65 aa)) the chain is Cytoplasmic. The chain crosses the membrane as a helical span at residues 66 to 86 (FQIVVVCLVVLDAIFVLCELL). At 87 to 103 (IDLSIIEADHHRIAPQV) the chain is on the extracellular side. A helical transmembrane segment spans residues 104-126 (FHYLSLALLTFFMVELAGKIFAY). Topologically, residues 127 to 134 (RLEFLHHK) are cytoplasmic. The helical transmembrane segment at 135–155 (FEVFDGIVVVVSFILDIIYIS) threads the bilayer. The Extracellular segment spans residues 156 to 162 (KEDAFDA). Residues 163–183 (MGLLILLRLWRVARIINGILV) traverse the membrane as a helical segment. Over 184–235 (SVQNRANHRVEKLKEINESLVHQVNELKEQNTKMDQENVRLRALLKDHSIDF) the chain is Cytoplasmic. Residues 187–231 (NRANHRVEKLKEINESLVHQVNELKEQNTKMDQENVRLRALLKDH) are a coiled coil.

This sequence belongs to the hydrogen channel family. In terms of assembly, homodimer.

It localises to the membrane. It is found in the cell membrane. Its function is as follows. Mediates the voltage-dependent proton permeability of excitable membranes. Forms a proton-selective channel through which protons may pass in accordance with their electrochemical gradient. The chain is Voltage-gated hydrogen channel 1 (hvcn1) from Danio rerio (Zebrafish).